Consider the following 555-residue polypeptide: Vacuolar fusion protein MON1 homolog A (555 aa).

Over residues 1–12 (MAADMQRKRSSE) the composition is skewed to basic and acidic residues. Residues 1 to 87 (MAADMQRKRS…RGPPPLPADM (87 aa)) are disordered. Residues serine 31 and serine 56 each carry the phosphoserine modification. Threonine 61 carries the phosphothreonine modification. Phosphoserine is present on serine 91. Positions 114-147 (PGSSEDWLDPPGAVGRPATEPPREGTAEGDEEDA) are disordered.

Belongs to the MON1/SAND family. As to quaternary structure, interacts with CCZ1. Found in a complex with RMC1, CCZ1, MON1A and MON1B. The MON1A-CCZ1B complex interacts with RIMOC1. The MON1A-CCZ1B complex interacts with RAB7A and this interaction is enhanced in the presence of RIMOC1.

In terms of biological role, plays an important role in membrane trafficking through the secretory apparatus. Not involved in endocytic trafficking to lysosomes. Acts in concert with CCZ1, as a guanine exchange factor (GEF) for RAB7, promotes the exchange of GDP to GTP, converting it from an inactive GDP-bound form into an active GTP-bound form. The sequence is that of Vacuolar fusion protein MON1 homolog A (MON1A) from Macaca fascicularis (Crab-eating macaque).